The chain runs to 170 residues: Photosystem I assembly protein Ycf3 (170 aa).

TPR repeat units follow at residues 35 to 68, 72 to 105, and 120 to 153; these read AFCY…EEDP, SYII…NPRL, and GLKA…APNN.

Belongs to the Ycf3 family.

The protein resides in the plastid. It localises to the chloroplast thylakoid membrane. Essential for the assembly of the photosystem I (PSI) complex. May act as a chaperone-like factor to guide the assembly of the PSI subunits. The protein is Photosystem I assembly protein Ycf3 of Gracilaria tenuistipitata var. liui (Red alga).